We begin with the raw amino-acid sequence, 450 residues long: Probable ECA polymerase (450 aa).

The next 11 membrane-spanning stretches (helical) occupy residues 6–26 (FSGL…LTWF), 37–57 (VFFS…TSVL), 63–83 (VGVA…CFYA), 118–138 (VILM…NGFL), 155–175 (GVAL…VYFL), 181–201 (AWLF…MIVG), 207–227 (IIIA…ISLW), 228–248 (MLAA…LKRY), 341–361 (LVVM…GLII), 378–398 (YKAA…IVLA), and 410–430 (VFFI…YWLF).

Belongs to the WzyE family. As to quaternary structure, probably part of a complex composed of WzxE, WzyE and WzzE.

Its subcellular location is the cell inner membrane. It participates in bacterial outer membrane biogenesis; enterobacterial common antigen biosynthesis. In terms of biological role, probably involved in the polymerization of enterobacterial common antigen (ECA) trisaccharide repeat units. The protein is Probable ECA polymerase of Escherichia coli O127:H6 (strain E2348/69 / EPEC).